A 190-amino-acid chain; its full sequence is MTIPTISELKKDRIIPHVFPNDKIDLNVDLFISFKAGKEVNHGNVLDIAGTGSVPRNIKFSEEPPDGYCFVLFMVDPDYPSRLRPDGKEYIHWVVSGIKTKELIKGTQKNCVTILPYVGPSIKKGTGLHRISFIISLIKEEDKDNITGLPHYKGEKYITRVKFNNYESVHNIAQINNMKIVGYNWCQIEG.

It belongs to the phosphatidylethanolamine-binding protein family.

This is Putative phosphatidylethanolamine-binding protein from Plasmodium falciparum.